The following is a 439-amino-acid chain: Histidine--tRNA ligase (439 aa).

It belongs to the class-II aminoacyl-tRNA synthetase family. In terms of assembly, homodimer.

The protein resides in the cytoplasm. It carries out the reaction tRNA(His) + L-histidine + ATP = L-histidyl-tRNA(His) + AMP + diphosphate + H(+). The polypeptide is Histidine--tRNA ligase (Clostridium tetani (strain Massachusetts / E88)).